A 193-amino-acid chain; its full sequence is C-type lectin domain family 3 member A homolog (193 aa).

An N-terminal signal peptide occupies residues 1-24 (MAQAGLLIWLFFTILLLDLTCTQS). 3 cysteine pairs are disulfide-bonded: Cys-66-Cys-76, Cys-93-Cys-188, and Cys-164-Cys-180. The C-type lectin domain occupies 72 to 189 (IHKKCYLSFE…CRSLKKYICE (118 aa)).

The protein localises to the secreted. This chain is C-type lectin domain family 3 member A homolog (clec3a), found in Xenopus laevis (African clawed frog).